The primary structure comprises 99 residues: Secreted RxLR effector protein 94 (99 aa).

The short motif at 35–55 (RQLRQSANPSKAWHQWKSETR) is the RxLR-dEER element.

It belongs to the RxLR effector family.

It localises to the secreted. The protein resides in the host nucleus. It is found in the host cytoplasm. Functionally, secreted effector that completely suppresses the host cell death induced by cell death-inducing proteins. In Plasmopara viticola (Downy mildew of grapevine), this protein is Secreted RxLR effector protein 94.